A 307-amino-acid polypeptide reads, in one-letter code: MKTFLILALLAIVATTARIAVRVPVPQLQPQNPSQQQPQEQVPLVQQQQFPGQQQPFPPQQPYPQPQPFPSQQPYLQLQPFPQPQLPYPQPQLPYPQPQLPYPQPQPFRPQQPYPQSQPQYSQPQQPISQQQQQQQQQQQQKQQQQQQQQILQQILQQQLIPCRDVVLQQHSIAYGSSQVLQQSTYQLVQQLCCQQLWQIPEQSRCQAIHNVVHAIILHQQQQQQQQQQQQPLSQVSFQQPQQQYPSGQGSFQPSQQNPQAQGSVQPQQLPQFEEIRNLALETLPAMCNVYIPPYCTIAPVGIFGTN.

The N-terminal stretch at 1–20 is a signal peptide; sequence MKTFLILALLAIVATTARIA. Low complexity predominate over residues 29–55; sequence QPQNPSQQQPQEQVPLVQQQQFPGQQQ. Disordered stretches follow at residues 29–134 and 242–267; these read QPQN…QQQQ and QQQY…SVQP. Pro residues-rich tracts occupy residues 56-71 and 81-113; these read PFPP…PFPS and FPQP…PQQP. The tract at residues 76–108 is sufficient to initiate the primary inflammatory response to gluten in Celiac Sprue patients; it reads LQLQPFPQPQLPYPQPQLPYPQPQLPYPQPQPF. Composition is skewed to low complexity over residues 114 to 134 and 242 to 260; these read YPQS…QQQQ and QQQY…QNPQ.

The protein belongs to the gliadin/glutenin family. In terms of processing, substrate of transglutaminase. Expressed in endosperm.

Gliadin is the major seed storage protein in wheat. This Triticum aestivum (Wheat) protein is Alpha/beta-gliadin MM1.